We begin with the raw amino-acid sequence, 349 residues long: Mitomycin biosynthesis 6-O-methyltransferase (349 aa).

S-adenosyl-L-methionine contacts are provided by residues S167, G190, 213-214, 240-241, and K255; these read ER and DF. H259 acts as the Proton acceptor in catalysis. Substrate is bound at residue N288.

The protein belongs to the class I-like SAM-binding methyltransferase superfamily. Cation-independent O-methyltransferase family. COMT subfamily. Homodimer.

It catalyses the reaction 6-demethylmitomycin A + S-adenosyl-L-methionine = mitomycin A + S-adenosyl-L-homocysteine. The enzyme catalyses 6-demethylmitomycin B + S-adenosyl-L-methionine = mitomycin B + S-adenosyl-L-homocysteine. Its activity is regulated as follows. Completely inhibited by Zn(2+) and Cu(2+). Its function is as follows. Involved in the biosynthesis of the quinone methoxy group present in the mitomycin A and B, which are used as anticancer agents. In vitro, catalyzes the 6-O-methylation of both C9-beta- and C9-alpha-configured 6-hydroxymitomycins via the transfer of the S-methyl group of S-adenosyl-L-methionine (AdoMet) to the 6-demethylmitomycin A and B. It can also use hydroxyquinone as substrate. The sequence is that of Mitomycin biosynthesis 6-O-methyltransferase from Streptomyces lavendulae.